The primary structure comprises 373 residues: Methylmalonyl-CoA decarboxylase subunit beta (373 aa).

The next 10 helical transmembrane spans lie at 17 to 37 (FLAF…LLYL), 38 to 58 (AFAR…CLLA), 81 to 101 (IFPP…PLIA), 106 to 126 (LLLG…AMML), 132 to 152 (EAAA…YLAT), 156 to 176 (PHLL…VPLI), 206 to 226 (IVFP…ITSL), 257 to 277 (VTIF…FLSL), 280 to 300 (IKII…GVLF), and 343 to 363 (FLLM…AVAA).

The protein belongs to the GcdB/MmdB/OadB family. The methylmalonyl-CoA decarboxylase is composed of five subunits: the carboxyltransferase alpha subunit (MmdA), the tunnel beta subunit (MmdB), the biotin-containing gamma subunit (MmdC), and the delta (MmdD) and epsilon (MmdE) subunits. In terms of processing, the N-terminus is blocked.

The protein resides in the cell membrane. The catalysed reaction is (S)-methylmalonyl-CoA + Na(+)(in) + H(+)(out) = propanoyl-CoA + Na(+)(out) + CO2. With respect to regulation, completely inhibited by avidin. Functionally, tunnel subunit of the sodium ion pump methylmalonyl-CoA decarboxylase, which converts the chemical energy of a decarboxylation reaction into an electrochemical gradient of Na(+) ions across the cytoplasmic membrane, thereby creating a sodium ion motive force that is used for ATP synthesis. The beta subunit catalyzes the decarboxylation of the carboxybiotin carrier protein and the coupled export of Na(+) ions. Can also convert malonyl-CoA into acetyl-CoA. The polypeptide is Methylmalonyl-CoA decarboxylase subunit beta (Veillonella parvula (Staphylococcus parvulus)).